Here is a 329-residue protein sequence, read N- to C-terminus: GTP 3',8-cyclase (329 aa).

In terms of domain architecture, Radical SAM core spans 8–234 (AFARKFYYLR…QLRQRSDGPA (227 aa)). Residue arginine 17 coordinates GTP. The [4Fe-4S] cluster site is built by cysteine 24 and cysteine 28. Tyrosine 30 is an S-adenosyl-L-methionine binding site. Cysteine 31 lines the [4Fe-4S] cluster pocket. Arginine 68 contacts GTP. Glycine 72 contributes to the S-adenosyl-L-methionine binding site. Threonine 99 contacts GTP. Serine 123 provides a ligand contact to S-adenosyl-L-methionine. Lysine 160 contacts GTP. Residue methionine 194 coordinates S-adenosyl-L-methionine. The [4Fe-4S] cluster site is built by cysteine 257 and cysteine 260. 262–264 (RLR) serves as a coordination point for GTP. Residue cysteine 274 coordinates [4Fe-4S] cluster.

It belongs to the radical SAM superfamily. MoaA family. In terms of assembly, monomer and homodimer. Requires [4Fe-4S] cluster as cofactor.

It carries out the reaction GTP + AH2 + S-adenosyl-L-methionine = (8S)-3',8-cyclo-7,8-dihydroguanosine 5'-triphosphate + 5'-deoxyadenosine + L-methionine + A + H(+). Its pathway is cofactor biosynthesis; molybdopterin biosynthesis. Catalyzes the cyclization of GTP to (8S)-3',8-cyclo-7,8-dihydroguanosine 5'-triphosphate. In Salmonella paratyphi B (strain ATCC BAA-1250 / SPB7), this protein is GTP 3',8-cyclase.